Here is a 466-residue protein sequence, read N- to C-terminus: Flagellum-specific ATP synthase (466 aa).

194–201 (SSSGLGKS) serves as a coordination point for ATP.

This sequence belongs to the ATPase alpha/beta chains family.

Its subcellular location is the cytoplasm. It carries out the reaction ATP + H2O + 4 H(+)(in) = ADP + phosphate + 5 H(+)(out). Its function is as follows. Probable catalytic subunit of a protein translocase for flagellum-specific export, or a proton translocase involved in local circuits at the flagellum. May be involved in a specialized protein export pathway that proceeds without signal peptide cleavage. The sequence is that of Flagellum-specific ATP synthase (fliI) from Buchnera aphidicola subsp. Schizaphis graminum (strain Sg).